Here is a 308-residue protein sequence, read N- to C-terminus: D-alanine--D-alanine ligase (308 aa).

The ATP-grasp domain maps to 102-302 (KKVAAAAGIP…FGDLVSWMVE (201 aa)). 128-183 (PLQPPYVVKPVREGSSFGVVIVKEDQSHPPQILTSSEWPFGNQVMVERYIHGRELT) contributes to the ATP binding site. Mg(2+)-binding residues include Asp252, Glu269, and Asn271.

The protein belongs to the D-alanine--D-alanine ligase family. The cofactor is Mg(2+). Requires Mn(2+) as cofactor.

It is found in the cytoplasm. It catalyses the reaction 2 D-alanine + ATP = D-alanyl-D-alanine + ADP + phosphate + H(+). Its pathway is cell wall biogenesis; peptidoglycan biosynthesis. Functionally, cell wall formation. This is D-alanine--D-alanine ligase from Agrobacterium fabrum (strain C58 / ATCC 33970) (Agrobacterium tumefaciens (strain C58)).